Here is a 157-residue protein sequence, read N- to C-terminus: Small ribosomal subunit protein uS7 (157 aa).

This sequence belongs to the universal ribosomal protein uS7 family. As to quaternary structure, part of the 30S ribosomal subunit. Contacts proteins S9 and S11.

Functionally, one of the primary rRNA binding proteins, it binds directly to 16S rRNA where it nucleates assembly of the head domain of the 30S subunit. Is located at the subunit interface close to the decoding center, probably blocks exit of the E-site tRNA. The protein is Small ribosomal subunit protein uS7 of Caulobacter vibrioides (strain ATCC 19089 / CIP 103742 / CB 15) (Caulobacter crescentus).